We begin with the raw amino-acid sequence, 554 residues long: 2-succinyl-5-enolpyruvyl-6-hydroxy-3-cyclohexene-1-carboxylate synthase (554 aa).

It belongs to the TPP enzyme family. MenD subfamily. As to quaternary structure, homodimer. Mg(2+) is required as a cofactor. The cofactor is Mn(2+). It depends on thiamine diphosphate as a cofactor.

It carries out the reaction isochorismate + 2-oxoglutarate + H(+) = 5-enolpyruvoyl-6-hydroxy-2-succinyl-cyclohex-3-ene-1-carboxylate + CO2. Its pathway is quinol/quinone metabolism; 1,4-dihydroxy-2-naphthoate biosynthesis; 1,4-dihydroxy-2-naphthoate from chorismate: step 2/7. The protein operates within quinol/quinone metabolism; menaquinone biosynthesis. In terms of biological role, catalyzes the thiamine diphosphate-dependent decarboxylation of 2-oxoglutarate and the subsequent addition of the resulting succinic semialdehyde-thiamine pyrophosphate anion to isochorismate to yield 2-succinyl-5-enolpyruvyl-6-hydroxy-3-cyclohexene-1-carboxylate (SEPHCHC). This is 2-succinyl-5-enolpyruvyl-6-hydroxy-3-cyclohexene-1-carboxylate synthase from Flavobacterium johnsoniae (strain ATCC 17061 / DSM 2064 / JCM 8514 / BCRC 14874 / CCUG 350202 / NBRC 14942 / NCIMB 11054 / UW101) (Cytophaga johnsonae).